We begin with the raw amino-acid sequence, 216 residues long: Putative transmembrane protein RNF32-DT (216 aa).

The helical transmembrane segment at 177–197 (WIPLLLVAGCVSCFVGLAVCV) threads the bilayer.

As to expression, expressed only in testis.

It is found in the cytoplasm. Its subcellular location is the membrane. The polypeptide is Putative transmembrane protein RNF32-DT (Homo sapiens (Human)).